Here is a 78-residue protein sequence, read N- to C-terminus: Large ribosomal subunit protein eL20 (78 aa).

Belongs to the eukaryotic ribosomal protein eL20 family. In terms of assembly, part of the 50S ribosomal subunit. Binds 23S rRNA.

The sequence is that of Large ribosomal subunit protein eL20 from Methanothermobacter thermautotrophicus (strain ATCC 29096 / DSM 1053 / JCM 10044 / NBRC 100330 / Delta H) (Methanobacterium thermoautotrophicum).